We begin with the raw amino-acid sequence, 372 residues long: Flap endonuclease 1 (372 aa).

Residues 1-105 (MGVKGLNQLI…GELEKRLLRR (105 aa)) are N-domain. Asp34 is a binding site for Mg(2+). 2 residues coordinate DNA: Arg47 and Arg71. The Mg(2+) site is built by Asp87, Glu159, Glu161, Asp180, and Asp182. The interval 123 to 254 (EVLKFEKRLV…ATAFKLIKEH (132 aa)) is I-domain. Position 159 (Glu159) interacts with DNA. Gly232 and Asp234 together coordinate DNA. Asp234 is a binding site for Mg(2+). The tract at residues 339 to 347 (VQGRLDGFF) is interaction with PCNA. Basic and acidic residues predominate over residues 353 to 366 (DDKKRKADPKESKA). The segment at 353–372 (DDKKRKADPKESKASKKKKK) is disordered.

The protein belongs to the XPG/RAD2 endonuclease family. FEN1 subfamily. As to quaternary structure, interacts with PCNA. Three molecules of RAD27 bind to one PCNA trimer with each molecule binding to one PCNA monomer. PCNA stimulates the nuclease activity without altering cleavage specificity. Requires Mg(2+) as cofactor. Phosphorylated. Phosphorylation upon DNA damage induces relocalization to the nuclear plasma.

The protein localises to the nucleus. It is found in the nucleolus. The protein resides in the nucleoplasm. Its subcellular location is the mitochondrion. In terms of biological role, structure-specific nuclease with 5'-flap endonuclease and 5'-3' exonuclease activities involved in DNA replication and repair. During DNA replication, cleaves the 5'-overhanging flap structure that is generated by displacement synthesis when DNA polymerase encounters the 5'-end of a downstream Okazaki fragment. It enters the flap from the 5'-end and then tracks to cleave the flap base, leaving a nick for ligation. Also involved in the long patch base excision repair (LP-BER) pathway, by cleaving within the apurinic/apyrimidinic (AP) site-terminated flap. Acts as a genome stabilization factor that prevents flaps from equilibrating into structures that lead to duplications and deletions. Also possesses 5'-3' exonuclease activity on nicked or gapped double-stranded DNA, and exhibits RNase H activity. Also involved in replication and repair of rDNA and in repairing mitochondrial DNA. The protein is Flap endonuclease 1 of Candida albicans (strain WO-1) (Yeast).